A 174-amino-acid chain; its full sequence is Achaete-scute homolog 3 (174 aa).

The basic motif stretch occupies residues 92 to 105 (AFIRKRNERERQRV). In terms of domain architecture, bHLH spans 92–144 (AFIRKRNERERQRVKCVNEGYARLRRHLPEDYLEKRLSKVETLRAAIKYISYL). The interval 106–144 (KCVNEGYARLRRHLPEDYLEKRLSKVETLRAAIKYISYL) is helix-loop-helix motif. Residues 153–174 (SETKKNPRTASCGSLDPALRVI) form a disordered region.

In terms of assembly, efficient DNA binding requires dimerization with another bHLH protein. Expressed in the salivary duct cells. Also expressed at lower levels in testis and epididymis. Expressed in the olfactory epithelium (OE), in a subset of apical microvillar cells.

The protein localises to the nucleus. In terms of biological role, transcriptional repressor. Inhibits myogenesis. Plays a role in progenitor cells which differentiate into ductal and acinar, but not myoepithelial, cell lineages in the salivary glands. Involved in the functions of the microvillar cells and Bowman's glands and probably, in a non-cell-autonomous manner, in the development or regeneration of a complete olfactory epithelium (OE). The sequence is that of Achaete-scute homolog 3 (Ascl3) from Mus musculus (Mouse).